A 92-amino-acid chain; its full sequence is Putative phosphotransferase enzyme IIB component SgcB (92 aa).

The PTS EIIB type-2 domain occupies 1 to 92 (MKKILVACGT…KQQIKALLTQ (92 aa)). The active-site Phosphocysteine intermediate is the Cys-8.

The protein resides in the cytoplasm. The phosphoenolpyruvate-dependent sugar phosphotransferase system (sugar PTS), a major carbohydrate active -transport system, catalyzes the phosphorylation of incoming sugar substrates concomitantly with their translocation across the cell membrane. The polypeptide is Putative phosphotransferase enzyme IIB component SgcB (sgcB) (Escherichia coli (strain K12)).